The sequence spans 358 residues: MIGKIKKFNFKSLLILNTFALIATSYLFNNFIFIGVYTLFFFISLFTTKNGIKIIKKLNLLQNIRTEGPANHLKKSDTPTMGGVFMVIPFLIFLLIININLGSLKLFLLLLTIFGFFITGFVDDFLSIKKEQNTGLKTKEKFFLQSIIAIIFIFLAYEKDLINPLITVSDSWQINMNIFTLPISFLVLVGISNSVNLTDGLDGLAAGCSGIVFYGLGTEILMKEQQELIIFSILCYSMSGICLGFLKYNSYPAKIFMGDTGSLSIGAILGSIALLTNSVFTLSIFSGIFIIESLSVMIQVGVFKITKKLFHNGKRIFLMAPLHHHFELKGVKEQKIVENFWKINILLVILGIVLKINL.

The next 9 helical transmembrane spans lie at 13-35 (LLIL…IFIG), 81-101 (MGGV…NINL), 106-126 (LFLL…DDFL), 142-162 (FFLQ…KDLI), 171-191 (SWQI…LVGI), 201-221 (LDGL…TEIL), 228-248 (LIIF…FLKY), 268-290 (ILGS…GIFI), and 336-356 (IVEN…VLKI).

The protein belongs to the glycosyltransferase 4 family. MraY subfamily. It depends on Mg(2+) as a cofactor.

It is found in the cell inner membrane. The enzyme catalyses UDP-N-acetyl-alpha-D-muramoyl-L-alanyl-gamma-D-glutamyl-meso-2,6-diaminopimeloyl-D-alanyl-D-alanine + di-trans,octa-cis-undecaprenyl phosphate = di-trans,octa-cis-undecaprenyl diphospho-N-acetyl-alpha-D-muramoyl-L-alanyl-D-glutamyl-meso-2,6-diaminopimeloyl-D-alanyl-D-alanine + UMP. Its pathway is cell wall biogenesis; peptidoglycan biosynthesis. Catalyzes the initial step of the lipid cycle reactions in the biosynthesis of the cell wall peptidoglycan: transfers peptidoglycan precursor phospho-MurNAc-pentapeptide from UDP-MurNAc-pentapeptide onto the lipid carrier undecaprenyl phosphate, yielding undecaprenyl-pyrophosphoryl-MurNAc-pentapeptide, known as lipid I. The protein is Phospho-N-acetylmuramoyl-pentapeptide-transferase of Prochlorococcus marinus (strain MIT 9312).